Reading from the N-terminus, the 373-residue chain is Lipoyl amidotransferase LIPT1, mitochondrial (373 aa).

The N-terminal 25 residues, 1–25 (MLIPLSMKNCFRLLCQHKVPAAGFK), are a transit peptide targeting the mitochondrion. In terms of domain architecture, BPL/LPL catalytic spans 57–243 (LEGKPILFLW…EYAAHHQVDG (187 aa)). Positions 107, 151, 161, and 179 each coordinate (R)-lipoyl-5'-AMP.

Belongs to the LplA family.

Its subcellular location is the mitochondrion. It catalyses the reaction (R)-lipoyl-5'-AMP + L-lysyl-[lipoyl-carrier protein] = N(6)-[(R)-lipoyl]-L-lysyl-[lipoyl-carrier protein] + AMP + 2 H(+). The enzyme catalyses N(6)-[(R)-lipoyl]-L-lysyl-[glycine-cleavage complex H protein] + L-lysyl-[lipoyl-carrier protein] = L-lysyl-[glycine-cleavage complex H protein] + N(6)-[(R)-lipoyl]-L-lysyl-[lipoyl-carrier protein]. The protein operates within protein modification; protein lipoylation via exogenous pathway; protein N(6)-(lipoyl)lysine from lipoate: step 2/2. Its function is as follows. Lipoyl amidotransferase that catalyzes the transfer of lipoyl moieties from lipoyl-protein H of the glycine cleavage system (lipoyl-GCSH) to E2 subunits of the pyruvate dehydrogenase complex (PDCE2). Unable to catalyze the transfer of octanoyl from octanoyl-GCSH to PDCE2. In vitro, it is also able to catalyze the transfer of the lipoyl group from lipoyl-AMP to the specific lysine residue of lipoyl domains of lipoate-dependent enzymes but this reaction may not be physiologically relevant. This chain is Lipoyl amidotransferase LIPT1, mitochondrial, found in Mus musculus (Mouse).